The chain runs to 301 residues: Indole-3-glycerol phosphate synthase (301 aa).

The protein belongs to the TrpC family.

It carries out the reaction 1-(2-carboxyphenylamino)-1-deoxy-D-ribulose 5-phosphate + H(+) = (1S,2R)-1-C-(indol-3-yl)glycerol 3-phosphate + CO2 + H2O. Its pathway is amino-acid biosynthesis; L-tryptophan biosynthesis; L-tryptophan from chorismate: step 4/5. In Prochlorococcus marinus (strain MIT 9313), this protein is Indole-3-glycerol phosphate synthase.